The primary structure comprises 108 residues: Tyrosine-protein phosphatase 5 (108 aa).

Residues Q1–V108 enclose the Tyrosine-protein phosphatase domain. D78 contacts substrate.

The protein belongs to the protein-tyrosine phosphatase family.

It carries out the reaction O-phospho-L-tyrosyl-[protein] + H2O = L-tyrosyl-[protein] + phosphate. The polypeptide is Tyrosine-protein phosphatase 5 (STY-5) (Styela plicata (Wrinkled sea squirt)).